The primary structure comprises 415 residues: Gamma-glutamyl phosphate reductase (415 aa).

This sequence belongs to the gamma-glutamyl phosphate reductase family.

It is found in the cytoplasm. It carries out the reaction L-glutamate 5-semialdehyde + phosphate + NADP(+) = L-glutamyl 5-phosphate + NADPH + H(+). Its pathway is amino-acid biosynthesis; L-proline biosynthesis; L-glutamate 5-semialdehyde from L-glutamate: step 2/2. Its function is as follows. Catalyzes the NADPH-dependent reduction of L-glutamate 5-phosphate into L-glutamate 5-semialdehyde and phosphate. The product spontaneously undergoes cyclization to form 1-pyrroline-5-carboxylate. This chain is Gamma-glutamyl phosphate reductase, found in Clostridium perfringens (strain 13 / Type A).